A 544-amino-acid polypeptide reads, in one-letter code: Chaperonin GroEL (544 aa).

ATP-binding positions include 30 to 33, K51, 87 to 91, G415, 481 to 483, and D497; these read TLGP, DGTTT, and DAL.

Belongs to the chaperonin (HSP60) family. In terms of assembly, forms a cylinder of 14 subunits composed of two heptameric rings stacked back-to-back. Interacts with the co-chaperonin GroES.

The protein resides in the cytoplasm. The catalysed reaction is ATP + H2O + a folded polypeptide = ADP + phosphate + an unfolded polypeptide.. Together with its co-chaperonin GroES, plays an essential role in assisting protein folding. The GroEL-GroES system forms a nano-cage that allows encapsulation of the non-native substrate proteins and provides a physical environment optimized to promote and accelerate protein folding. The polypeptide is Chaperonin GroEL (Chlamydia muridarum (strain MoPn / Nigg)).